Here is a 42-residue protein sequence, read N- to C-terminus: uncharacterized protein (42 aa).

The helical transmembrane segment at 10-30 threads the bilayer; that stretch reads VANWVTVILMALAGYAVLALA.

The protein resides in the host membrane. This is an uncharacterized protein from Acinetobacter calcoaceticus (Arthrobacter siderocapsulatus).